Consider the following 417-residue polypeptide: UDP-N-acetylmuramoylalanine--D-glutamate ligase (417 aa).

An ATP-binding site is contributed by 104-110 (GSNGKST).

Belongs to the MurCDEF family.

The protein resides in the cytoplasm. The enzyme catalyses UDP-N-acetyl-alpha-D-muramoyl-L-alanine + D-glutamate + ATP = UDP-N-acetyl-alpha-D-muramoyl-L-alanyl-D-glutamate + ADP + phosphate + H(+). Its pathway is cell wall biogenesis; peptidoglycan biosynthesis. In terms of biological role, cell wall formation. Catalyzes the addition of glutamate to the nucleotide precursor UDP-N-acetylmuramoyl-L-alanine (UMA). This Francisella tularensis subsp. novicida (strain U112) protein is UDP-N-acetylmuramoylalanine--D-glutamate ligase.